An 88-amino-acid polypeptide reads, in one-letter code: Co-chaperonin GroES (88 aa).

This sequence belongs to the GroES chaperonin family. Heptamer of 7 subunits arranged in a ring. Interacts with the chaperonin GroEL.

The protein resides in the cytoplasm. Functionally, together with the chaperonin GroEL, plays an essential role in assisting protein folding. The GroEL-GroES system forms a nano-cage that allows encapsulation of the non-native substrate proteins and provides a physical environment optimized to promote and accelerate protein folding. GroES binds to the apical surface of the GroEL ring, thereby capping the opening of the GroEL channel. This chain is Co-chaperonin GroES, found in Rubrobacter xylanophilus (strain DSM 9941 / JCM 11954 / NBRC 16129 / PRD-1).